The chain runs to 131 residues: Small ribosomal subunit protein bS6 (131 aa).

Residues 98–131 (EASPMVKAKDERRERREDFANETSEETEAGDSEE) form a disordered region. Residues 104–116 (KAKDERRERREDF) show a composition bias toward basic and acidic residues. Over residues 120 to 131 (TSEETEAGDSEE) the composition is skewed to acidic residues.

This sequence belongs to the bacterial ribosomal protein bS6 family.

Binds together with bS18 to 16S ribosomal RNA. The polypeptide is Small ribosomal subunit protein bS6 (Edwardsiella ictaluri (strain 93-146)).